The primary structure comprises 345 residues: Isopentenyl-diphosphate delta-isomerase (345 aa).

Residue 14-15 (RK) participates in substrate binding. FMN contacts are provided by residues serine 71, 72 to 74 (SMT), serine 102, and asparagine 130. Position 102–104 (102–104 (SMR)) interacts with substrate. Glutamine 165 is a substrate binding site. Glutamate 166 lines the Mg(2+) pocket. Residues lysine 197, threonine 227, 277–279 (GLK), and 298–299 (AG) each bind FMN.

It belongs to the IPP isomerase type 2 family. As to quaternary structure, homooctamer. Dimer of tetramers. FMN serves as cofactor. Requires NADPH as cofactor. The cofactor is Mg(2+).

It localises to the cytoplasm. The catalysed reaction is isopentenyl diphosphate = dimethylallyl diphosphate. Involved in the biosynthesis of isoprenoids. Catalyzes the 1,3-allylic rearrangement of the homoallylic substrate isopentenyl (IPP) to its allylic isomer, dimethylallyl diphosphate (DMAPP). The sequence is that of Isopentenyl-diphosphate delta-isomerase from Rickettsia felis (strain ATCC VR-1525 / URRWXCal2) (Rickettsia azadi).